The primary structure comprises 158 residues: Glutamyl-tRNA(Gln) amidotransferase subunit C, mitochondrial (158 aa).

The protein belongs to the GatC family. Subunit of the heterotrimeric GatCAB amidotransferase (AdT) complex, composed of A, B and C subunits.

The protein resides in the mitochondrion. It carries out the reaction L-glutamyl-tRNA(Gln) + L-glutamine + ATP + H2O = L-glutaminyl-tRNA(Gln) + L-glutamate + ADP + phosphate + H(+). Functionally, allows the formation of correctly charged Gln-tRNA(Gln) through the transamidation of misacylated Glu-tRNA(Gln) in the mitochondria. The reaction takes place in the presence of glutamine and ATP through an activated gamma-phospho-Glu-tRNA(Gln). The chain is Glutamyl-tRNA(Gln) amidotransferase subunit C, mitochondrial from Drosophila grimshawi (Hawaiian fruit fly).